The following is a 698-amino-acid chain: Interleukin enhancer-binding factor 3 (698 aa).

One can recognise a DZF domain in the interval R5 to G379. Disordered stretches follow at residues Q51–T88, P374–A403, and E473–K522. The span at E61 to T71 shows a compositional bias: acidic residues. Basic and acidic residues-rich tracts occupy residues E72–T81 and P374–P384. Residues K372–K390 carry the Bipartite nuclear localization signal motif. The 70-residue stretch at E399–L468 folds into the DRBM 1 domain. Polar residues predominate over residues T490–A503. Positions H520–P586 constitute a DRBM 2 domain.

In terms of assembly, a component of a ybx2/frgy2-containing mRNA-ribonucleoprotein (mRNP) complex. Also a component of the CCAAT box transcription factor (CBTF) complex. Post-translationally, phosphorylated. Phosphorylation affects nuclear translocation. Methylated by protein arginine N-methyltransferase 1 (prmt1b) in the RGG-rich domain. Methylation decreases DNA-binding and thereby decreases transcription of the gata2 gene, but does not regulate dsRNA binding or subcellular localization.

Its subcellular location is the nucleus. It localises to the cytoplasm. Functionally, RNA-binding protein that plays an essential role in the biogenesis of circular RNAs (circRNAs) which are produced by back-splicing circularization of pre-mRNAs. Within the nucleus, promotes circRNAs processing by stabilizing the regulatory elements residing in the flanking introns of the circularized exons. Plays thereby a role in the back-splicing of a subset of circRNAs. As a consequence, participates in a wide range of transcriptional and post-transcriptional processes. Binds to poly-U elements and AU-rich elements (AREs) in the 3'-UTR of target mRNAs. Upon viral infection, ILF3 accumulates in the cytoplasm and participates in the innate antiviral response. Mechanistically, ILF3 becomes phosphorylated and activated by the double-stranded RNA-activated protein kinase/PKR which releases ILF3 from cellular mature circRNAs. In turn, unbound ILF3 molecules are able to interact with and thus inhibit viral mRNAs. Has a cytoplasmic role early in development as part of a ribonucleoprotein (mRNP) complex which may regulate mRNA transport and/or translation. Following nuclear localization at the mid-blastula transition, acts as a transcription factor and binds the 5'-CCAAT-3' promoter sequence to regulate transcription of the gata2 gene as a subunit of the CCAAT box transcription factor (CBTF). Its role as an mRNP component negatively regulates its activity as a transcription factor by precluding its nuclear localization. This Xenopus tropicalis (Western clawed frog) protein is Interleukin enhancer-binding factor 3.